The following is a 209-amino-acid chain: Iron-sulfur cluster assembly 2 homolog, mitochondrial (209 aa).

The transit peptide at 1–27 directs the protein to the mitochondrion; the sequence is MIRSIFKKNSSLPYFLKRSFITKPHSI. Fe cation-binding residues include C134, C199, and C201.

This sequence belongs to the HesB/IscA family. It depends on Fe cation as a cofactor.

Its subcellular location is the mitochondrion. Its function is as follows. Involved in the maturation of mitochondrial 4Fe-4S proteins functioning late in the iron-sulfur cluster assembly pathway. May be involved in the binding of an intermediate of Fe/S cluster assembly. This Dictyostelium discoideum (Social amoeba) protein is Iron-sulfur cluster assembly 2 homolog, mitochondrial (isca2).